Consider the following 162-residue polypeptide: Proepiregulin (162 aa).

The first 22 residues, 1 to 22 (METLPASWVLTLLCLGSHLLQA), serve as a signal peptide directing secretion. Positions 23–55 (VISTTVIPSCIPGESEDNCTALVQMEDDPRVAQ) are excised as a propeptide. Asn-40 carries N-linked (GlcNAc...) asparagine glycosylation. The Extracellular portion of the chain corresponds to 53 to 112 (VAQVQITKCSSDMDGYCLHGQCIYLVDMREKFCRCEVGYTGLRCEHFFLTVHQPLSKEYV). Residues 57 to 97 (QITKCSSDMDGYCLHGQCIYLVDMREKFCRCEVGYTGLRCE) enclose the EGF-like domain. Intrachain disulfides connect Cys-61–Cys-74, Cys-69–Cys-85, and Cys-87–Cys-96. The propeptide at 102-162 (TVHQPLSKEY…TSGDPVLPQV (61 aa)) is removed in mature form. The chain crosses the membrane as a helical span at residues 113-133 (ALTVILIFLFLIITAGCIYYF). Over 134-162 (CRWYKNRKSKKSREEYERVTSGDPVLPQV) the chain is Cytoplasmic.

In terms of assembly, interacts with EGFR and ERBB4.

The protein localises to the secreted. It is found in the extracellular space. Its subcellular location is the cell membrane. In terms of biological role, ligand of the EGF receptor/EGFR and ERBB4. Stimulates EGFR and ERBB4 tyrosine phosphorylation. Contributes to inflammation, wound healing, tissue repair, and oocyte maturation by regulating angiogenesis and vascular remodeling and by stimulating cell proliferation. This Mus musculus (Mouse) protein is Proepiregulin (Ereg).